Here is a 1106-residue protein sequence, read N- to C-terminus: Translation initiation factor IF-2 (1106 aa).

2 stretches are compositionally biased toward low complexity: residues G57 to G72 and A81 to P97. Disordered regions lie at residues G57–H434 and P466–R497. 2 stretches are compositionally biased toward pro residues: residues P113–S123 and P138–S148. The segment covering A172–P199 has biased composition (low complexity). Composition is skewed to pro residues over residues P200–K214 and T223–P235. Low complexity-rich tracts occupy residues P251 to R292, P319 to R329, and Y395 to G405. A compositionally biased stretch (basic and acidic residues) spans R408–R422. Residues A482–R497 show a composition bias toward basic residues. The tr-type G domain occupies R598–K771. Residues G607 to T614 are G1. G607–T614 serves as a coordination point for GTP. Positions G632–H636 are G2. A G3 region spans residues D657–G660. GTP is bound by residues D657–H661 and N711–D714. The tract at residues N711–D714 is G4. The interval S747–L749 is G5.

Belongs to the TRAFAC class translation factor GTPase superfamily. Classic translation factor GTPase family. IF-2 subfamily.

It is found in the cytoplasm. In terms of biological role, one of the essential components for the initiation of protein synthesis. Protects formylmethionyl-tRNA from spontaneous hydrolysis and promotes its binding to the 30S ribosomal subunits. Also involved in the hydrolysis of GTP during the formation of the 70S ribosomal complex. The sequence is that of Translation initiation factor IF-2 from Synechococcus sp. (strain RCC307).